The sequence spans 110 residues: Iron-sulfur cluster assembly protein CyaY (110 aa).

It belongs to the frataxin family.

Functionally, involved in iron-sulfur (Fe-S) cluster assembly. May act as a regulator of Fe-S biogenesis. This is Iron-sulfur cluster assembly protein CyaY from Variovorax paradoxus (strain S110).